The primary structure comprises 562 residues: Arginine--tRNA ligase (562 aa).

Positions Pro-122–His-132 match the 'HIGH' region motif.

It belongs to the class-I aminoacyl-tRNA synthetase family. Monomer.

The protein localises to the cytoplasm. The enzyme catalyses tRNA(Arg) + L-arginine + ATP = L-arginyl-tRNA(Arg) + AMP + diphosphate. The sequence is that of Arginine--tRNA ligase from Chlamydia felis (strain Fe/C-56) (Chlamydophila felis).